A 20-amino-acid chain; its full sequence is Kassinatuerin-2 (20 aa).

The residue at position 20 (I20) is an Isoleucine amide.

As to expression, expressed by the skin dorsal glands.

It is found in the secreted. Its function is as follows. Has no antimicrobial activities against bacteria (E.coli and S.aureus) nor against the fungus C.albicans. The sequence is that of Kassinatuerin-2 from Kassina senegalensis (Senegal running frog).